A 276-amino-acid chain; its full sequence is Proteasome subunit beta type-8 (276 aa).

A propeptide spans 1 to 72 (removed in mature form); it reads MALLEVCGAP…KNIRKEMVHG (72 aa). The active-site Nucleophile is T73.

The protein belongs to the peptidase T1B family. In terms of assembly, the 26S proteasome consists of a 20S proteasome core and two 19S regulatory subunits. The 20S proteasome core is composed of 28 subunits that are arranged in four stacked rings, resulting in a barrel-shaped structure. The two end rings are each formed by seven alpha subunits, and the two central rings are each formed by seven beta subunits. The catalytic chamber with the active sites is on the inside of the barrel. Component of the immunoproteasome, where it displaces the equivalent housekeeping subunit PSMB5. Component of the spermatoproteasome, a form of the proteasome specifically found in testis. Directly interacts with POMP. In terms of processing, autocleaved. The resulting N-terminal Thr residue of the mature subunit is responsible for the nucleophile proteolytic activity.

The protein localises to the cytoplasm. It is found in the nucleus. It catalyses the reaction Cleavage of peptide bonds with very broad specificity.. Functionally, the proteasome is a multicatalytic proteinase complex which is characterized by its ability to cleave peptides with Arg, Phe, Tyr, Leu, and Glu adjacent to the leaving group at neutral or slightly basic pH. The proteasome has an ATP-dependent proteolytic activity. This subunit is involved in antigen processing to generate class I binding peptides. May participate in the generation of spliced peptides resulting from the ligation of two separate proteasomal cleavage products that are not contiguous in the parental protein. Required for adipocyte differentiation. This chain is Proteasome subunit beta type-8 (PSMB8), found in Canis lupus familiaris (Dog).